The following is a 296-amino-acid chain: tRNA-cytidine(32) 2-sulfurtransferase (296 aa).

A PP-loop motif motif is present at residues 72–77 (SGGKDS). Positions 147, 150, and 238 each coordinate [4Fe-4S] cluster.

It belongs to the TtcA family. As to quaternary structure, homodimer. Mg(2+) serves as cofactor. It depends on [4Fe-4S] cluster as a cofactor.

The protein resides in the cytoplasm. It catalyses the reaction cytidine(32) in tRNA + S-sulfanyl-L-cysteinyl-[cysteine desulfurase] + AH2 + ATP = 2-thiocytidine(32) in tRNA + L-cysteinyl-[cysteine desulfurase] + A + AMP + diphosphate + H(+). It participates in tRNA modification. Its function is as follows. Catalyzes the ATP-dependent 2-thiolation of cytidine in position 32 of tRNA, to form 2-thiocytidine (s(2)C32). The sulfur atoms are provided by the cysteine/cysteine desulfurase (IscS) system. This is tRNA-cytidine(32) 2-sulfurtransferase from Sinorhizobium fredii (strain NBRC 101917 / NGR234).